A 157-amino-acid polypeptide reads, in one-letter code: DNA gyrase inhibitor (157 aa).

It belongs to the DNA gyrase inhibitor family. Interacts with DNA gyrase.

The protein resides in the cytoplasm. Inhibits the supercoiling activity of DNA gyrase. Acts by inhibiting DNA gyrase at an early step, prior to (or at the step of) binding of DNA by the gyrase. It protects cells against toxins that target DNA gyrase, by inhibiting activity of these toxins and reducing the formation of lethal double-strand breaks in the cell. This is DNA gyrase inhibitor from Shigella boydii serotype 18 (strain CDC 3083-94 / BS512).